Reading from the N-terminus, the 688-residue chain is Acyl-CoA synthetase short-chain family member B, mitochondrial (688 aa).

This sequence belongs to the ATP-dependent AMP-binding enzyme family.

It localises to the mitochondrion. The catalysed reaction is acetate + ATP + CoA = acetyl-CoA + AMP + diphosphate. Its function is as follows. Activates acetate so that it can be used for lipid synthesis or for energy generation. The polypeptide is Acyl-CoA synthetase short-chain family member B, mitochondrial (aslB) (Dictyostelium discoideum (Social amoeba)).